Consider the following 224-residue polypeptide: UPF0758 protein Lm4b_01560 (224 aa).

In terms of domain architecture, MPN spans V102–F224. Positions 173, 175, and 186 each coordinate Zn(2+). Residues H173–D186 carry the JAMM motif motif.

Belongs to the UPF0758 family.

The polypeptide is UPF0758 protein Lm4b_01560 (Listeria monocytogenes serotype 4b (strain CLIP80459)).